Here is a 222-residue protein sequence, read N- to C-terminus: Histidine biosynthesis bifunctional protein HisIE (222 aa).

Residues 1 to 128 (MQPLSPAFID…SNALSPPADA (128 aa)) form a phosphoribosyl-AMP cyclohydrolase region. A phosphoribosyl-ATP pyrophosphohydrolase region spans residues 129–222 (CTELFRVIES…AARRGAPRRH (94 aa)).

It in the N-terminal section; belongs to the PRA-CH family. In the C-terminal section; belongs to the PRA-PH family.

The protein resides in the cytoplasm. The enzyme catalyses 1-(5-phospho-beta-D-ribosyl)-ATP + H2O = 1-(5-phospho-beta-D-ribosyl)-5'-AMP + diphosphate + H(+). It carries out the reaction 1-(5-phospho-beta-D-ribosyl)-5'-AMP + H2O = 1-(5-phospho-beta-D-ribosyl)-5-[(5-phospho-beta-D-ribosylamino)methylideneamino]imidazole-4-carboxamide. It functions in the pathway amino-acid biosynthesis; L-histidine biosynthesis; L-histidine from 5-phospho-alpha-D-ribose 1-diphosphate: step 2/9. The protein operates within amino-acid biosynthesis; L-histidine biosynthesis; L-histidine from 5-phospho-alpha-D-ribose 1-diphosphate: step 3/9. The chain is Histidine biosynthesis bifunctional protein HisIE from Parasynechococcus marenigrum (strain WH8102).